Here is a 287-residue protein sequence, read N- to C-terminus: Bifunctional protein FolD (287 aa).

NADP(+)-binding positions include 160–162, S189, and T230; that span reads GRS.

This sequence belongs to the tetrahydrofolate dehydrogenase/cyclohydrolase family. As to quaternary structure, homodimer.

It catalyses the reaction (6R)-5,10-methylene-5,6,7,8-tetrahydrofolate + NADP(+) = (6R)-5,10-methenyltetrahydrofolate + NADPH. It carries out the reaction (6R)-5,10-methenyltetrahydrofolate + H2O = (6R)-10-formyltetrahydrofolate + H(+). It functions in the pathway one-carbon metabolism; tetrahydrofolate interconversion. In terms of biological role, catalyzes the oxidation of 5,10-methylenetetrahydrofolate to 5,10-methenyltetrahydrofolate and then the hydrolysis of 5,10-methenyltetrahydrofolate to 10-formyltetrahydrofolate. The protein is Bifunctional protein FolD of Chlamydia abortus (strain DSM 27085 / S26/3) (Chlamydophila abortus).